A 1083-amino-acid polypeptide reads, in one-letter code: Kinesin-like protein klp-19 (1083 aa).

One can recognise a Kinesin motor domain in the interval 6–328; it reads SLRVVVRARP…LRYADRAKQI (323 aa). 85 to 92 provides a ligand contact to ATP; the sequence is GQTGSGKT. The stretch at 408–435 forms a coiled coil; it reads MSALTQKNSRLEEDKAKLQSMLTDVRNT. The span at 458–471 shows a compositional bias: acidic residues; it reads TEESTTLADDDNDE. Positions 458–479 are disordered; sequence TEESTTLADDDNDETALGGQDD. Residues 487–650 adopt a coiled-coil conformation; it reads LPELQAELDD…KSKLQKREND (164 aa). Residues 1044–1055 show a composition bias toward polar residues; it reads DDSQPSPSNSTF. A disordered region spans residues 1044 to 1083; the sequence is DDSQPSPSNSTFVIGAAPTSEADGVPPIKRKSRRTDLGPL.

This sequence belongs to the TRAFAC class myosin-kinesin ATPase superfamily. Kinesin family. In terms of tissue distribution, expressed in the gonad.

The protein resides in the nucleus. It is found in the nucleoplasm. It localises to the cytoplasm. Its subcellular location is the cytoskeleton. The protein localises to the spindle. The protein resides in the chromosome. Its function is as follows. Required for chromosome movement and orientation on spindle poles in mitosis and meiosis. May play a role in early anterior-posterior chromosome movement in mitotic embryos. This chain is Kinesin-like protein klp-19, found in Caenorhabditis elegans.